A 239-amino-acid polypeptide reads, in one-letter code: Proteasome activator complex subunit 2 (239 aa).

Ala2 is modified (N-acetylalanine). Ser10 is modified (phosphoserine).

The protein belongs to the PA28 family. Heterodimer of PSME1 and PSME2, which forms a hexameric ring.

Functionally, implicated in immunoproteasome assembly and required for efficient antigen processing. The PA28 activator complex enhances the generation of class I binding peptides by altering the cleavage pattern of the proteasome. The protein is Proteasome activator complex subunit 2 (PSME2) of Homo sapiens (Human).